Here is a 645-residue protein sequence, read N- to C-terminus: Crossover junction endonuclease mus-81 (645 aa).

Disordered stretches follow at residues 98 to 119 (LAAA…RTAR) and 219 to 310 (GVAG…EDRK). The span at 223–252 (SANTSRNAIASGSGTSNPNRSENVNPNRQD) shows a compositional bias: polar residues. Over residues 296-305 (DSDDEDPKYD) the composition is skewed to acidic residues. Residues 353 to 459 (ELVLDTREVQ…NVVYIIENYN (107 aa)) form the ERCC4 domain.

It belongs to the XPF family. As to quaternary structure, interacts with eme-1. The cofactor is Mg(2+).

It is found in the nucleus. Its function is as follows. Interacts with eme-1 to form a DNA structure-specific endonuclease with substrate preference for branched DNA structures with a 5'-end at the branch nick. Typical substrates include 3'-flap structures, D-loops, replication forks and nicked Holliday junctions. May be required in mitosis for the processing of stalled or collapsed replication fork intermediates. May be required in meiosis for the repair of meiosis-specific double strand breaks subsequent to single-end invasion (SEI). This is Crossover junction endonuclease mus-81 (mus-81) from Neurospora crassa (strain ATCC 24698 / 74-OR23-1A / CBS 708.71 / DSM 1257 / FGSC 987).